The following is a 495-amino-acid chain: Trimethylamine methyltransferase MttB (495 aa).

Position 334 (pyrrolysine 334) is a non-standard amino acid, pyrrolysine.

The protein belongs to the trimethylamine methyltransferase family. Can form a complex with MttC.

The catalysed reaction is Co(I)-[trimethylamine-specific corrinoid protein] + trimethylamine + H(+) = methyl-Co(III)-[trimethylamine-specific corrinoid protein] + dimethylamine. It participates in one-carbon metabolism; methanogenesis from trimethylamine. Functionally, catalyzes the transfer of a methyl group from trimethylamine to the corrinoid cofactor of MttC. The polypeptide is Trimethylamine methyltransferase MttB (Methanosarcina barkeri).